The primary structure comprises 401 residues: Collagen and calcium-binding EGF domain-containing protein 1 (401 aa).

The N-terminal stretch at M1–G22 is a signal peptide. An EGF-like; calcium-binding domain is found at D126–T167. Disulfide bonds link C130-C142, C138-C151, and C153-C166. N134 carries N-linked (GlcNAc...) asparagine glycosylation. Disordered stretches follow at residues T229 to F321 and S344 to V401. Collagen-like domains are found at residues L234–P276 and G286–G319. The span at P235–A244 shows a compositional bias: pro residues. Positions T246–Q258 are enriched in low complexity.

This sequence belongs to the CCBE1 family. In terms of tissue distribution, not expressed in blood or lymphatic endothelial cells, correlating spatially and temporally with the migration routes of endothelial cells that bud from the PCV, migrate in association with somite boundaries and seed the horizontal myoseptum region from where lymphatic precursors later migrate.

Its subcellular location is the secreted. Functionally, required for lymphangioblast budding and angiogenic sprouting from venous endothelium during embryogenesis. Required for the formation of facial lymphatic structures. Necessary for lymphangiogenesis, but is probably not part of either the vegfc-vegfr3 signaling or sox18-prox1 transcriptional pathways. In Danio rerio (Zebrafish), this protein is Collagen and calcium-binding EGF domain-containing protein 1 (ccbe1).